The following is a 583-amino-acid chain: MSVVESSLPGVLRERASFQPNDKALTFIDYERSWDGVEETLTWSQLYRRTLNLAAQLREHGSTGDRALILAPQSLDYVVSFIASLQAGIVAVPLSIPQGGAHDERTVSVFADTAPAIVLTASSVVDNVVEYVQPQPGQNAPAVIEVDRLDLDARPSSGSRSAAHGHPDILYLQYTSGSTRTPAGVMVSNKNLFANFEQIMTSYYGVYGKVAPPGSTVVSWLPFYHDMGFVLGLILPILAGIPAVLTSPIGFLQRPARWIQMLASNTLAFTAAPNFAFDLASRKTKDEDMEGLDLGGVHGILNGSERVQPVTLKRFIDRFAPFNLDPKAIRPSYGMAEATVYVATRKAGQPPKIVQFDPQKLPDGQAERTESDGGTPLVSYGIVDTQLVRIVDPDTGIERPAGTIGEIWVHGDNVAIGYWQKPEATERTFSATIVNPSEGTPAGPWLRTGDSGFLSEGELFIMGRIKDLLIVYGRNHSPDDIEATIQTISPGRCAAIAVSEHGAEKLVAIIELKKKDESDDEAAERLGFVKREVTSAISKSHGLSVADLVLVSPGSIPITTSGKIRRAQCVELYRQDEFTRLDA.

Helical transmembrane passes span tyrosine 77–proline 97, valine 109–valine 129, and phenylalanine 229–isoleucine 249. Residues isoleucine 353 to threonine 375 form a disordered region.

It belongs to the ATP-dependent AMP-binding enzyme family.

It localises to the cell membrane. The protein is Putative fatty-acid--CoA ligase fadD25 (fadD25) of Mycobacterium tuberculosis (strain CDC 1551 / Oshkosh).